Reading from the N-terminus, the 120-residue chain is Ribosome-binding factor A (120 aa).

The protein belongs to the RbfA family. In terms of assembly, monomer. Binds 30S ribosomal subunits, but not 50S ribosomal subunits or 70S ribosomes.

It is found in the cytoplasm. One of several proteins that assist in the late maturation steps of the functional core of the 30S ribosomal subunit. Associates with free 30S ribosomal subunits (but not with 30S subunits that are part of 70S ribosomes or polysomes). Required for efficient processing of 16S rRNA. May interact with the 5'-terminal helix region of 16S rRNA. This Chlamydia caviae (strain ATCC VR-813 / DSM 19441 / 03DC25 / GPIC) (Chlamydophila caviae) protein is Ribosome-binding factor A.